The primary structure comprises 199 residues: MISIFIAEDQQMLLGALGSLLNLEDDMEVVGKGTTGQDAVDFVKKRQPDVCIMDIEMPGKTGLEAAEELKDTGCKIIILTTFARPGYFQRAIKAGVKGYLLKDSPSEELANAIRSVMNGKRIYAPELMEDLYSEANPLTDREKEVLELVADGKNTKEIAQELSIKSGTVRNYISMILEKLEVKNRIEAITRSKEKGWFK.

In terms of domain architecture, Response regulatory spans 3-117 (SIFIAEDQQM…ELANAIRSVM (115 aa)). 4-aspartylphosphate is present on Asp54. One can recognise an HTH luxR-type domain in the interval 131 to 196 (LYSEANPLTD…EAITRSKEKG (66 aa)). A DNA-binding region (H-T-H motif) is located at residues 155-174 (TKEIAQELSIKSGTVRNYIS).

Phosphorylated by DesK.

Its subcellular location is the cytoplasm. Its function is as follows. Member of the two-component regulatory system DesR/DesK, responsible for cold induction of the des gene coding for the Delta5 acyl-lipid desaturase. The chain is Transcriptional regulatory protein DesR (desR) from Bacillus subtilis (strain 168).